A 205-amino-acid polypeptide reads, in one-letter code: Ras-related protein Rab-18-B (205 aa).

GTP contacts are provided by Ser17, Gly20, Lys21, Ser22, Ser23, Asp34, Pro35, Thr40, Gly66, Lys123, Asp125, and Ala152. Residue Ser22 coordinates Mg(2+). 2 consecutive short sequence motifs (switch) follow at residues 31 to 45 and 63 to 80; these read DTFDPELAATIGVDF and DTAGQERFRTLTPSYYRG. Mg(2+) is bound at residue Thr40. Residue Cys198 is the site of S-palmitoyl cysteine attachment. A Cysteine methyl ester modification is found at Cys202. The S-geranylgeranyl cysteine moiety is linked to residue Cys202. A propeptide spans 203-205 (removed in mature form); the sequence is SLV.

Belongs to the small GTPase superfamily. Rab family. Mg(2+) serves as cofactor.

It is found in the endoplasmic reticulum membrane. It localises to the golgi apparatus. The protein localises to the cis-Golgi network membrane. Its subcellular location is the lipid droplet. The protein resides in the apical cell membrane. The enzyme catalyses GTP + H2O = GDP + phosphate + H(+). Regulated by guanine nucleotide exchange factors (GEFs) which promote the exchange of bound GDP for free GTP. Regulated by GTPase activating proteins (GAPs) which increase the GTP hydrolysis activity at the ER membrane. Inhibited by GDP dissociation inhibitors (GDIs) which prevent Rab-GDP dissociation. In terms of biological role, the small GTPases Rab are key regulators of intracellular membrane trafficking, from the formation of transport vesicles to their fusion with membranes. Rabs cycle between an inactive GDP-bound form and an active GTP-bound form that is able to recruit to membranes different sets of downstream effectors directly responsible for vesicle formation, movement, tethering and fusion. Required for the localization of ZFYVE1 to lipid droplets and for its function in mediating the formation of endoplasmic reticulum-lipid droplets (ER-LD) contacts. Also required for maintaining endoplasmic reticulum structure. Plays a role in apical endocytosis/recycling. Plays a key role in eye and brain development and neurodegeneration. The chain is Ras-related protein Rab-18-B (rab18b) from Danio rerio (Zebrafish).